A 297-amino-acid chain; its full sequence is Ribosomal RNA small subunit methyltransferase A (297 aa).

Residues Asn-28, Leu-30, Gly-55, Glu-76, Asp-101, and Asn-126 each coordinate S-adenosyl-L-methionine.

The protein belongs to the class I-like SAM-binding methyltransferase superfamily. rRNA adenine N(6)-methyltransferase family. RsmA subfamily.

The protein localises to the cytoplasm. It catalyses the reaction adenosine(1518)/adenosine(1519) in 16S rRNA + 4 S-adenosyl-L-methionine = N(6)-dimethyladenosine(1518)/N(6)-dimethyladenosine(1519) in 16S rRNA + 4 S-adenosyl-L-homocysteine + 4 H(+). In terms of biological role, specifically dimethylates two adjacent adenosines (A1518 and A1519) in the loop of a conserved hairpin near the 3'-end of 16S rRNA in the 30S particle. May play a critical role in biogenesis of 30S subunits. The sequence is that of Ribosomal RNA small subunit methyltransferase A from Latilactobacillus sakei subsp. sakei (strain 23K) (Lactobacillus sakei subsp. sakei).